We begin with the raw amino-acid sequence, 151 residues long: Prefoldin subunit alpha (151 aa).

The segment at 120 to 151 (TVEEETASLEEKAQQAQQQQMQQLQQMQQEDE) is disordered. The segment covering 133 to 151 (QQAQQQQMQQLQQMQQEDE) has biased composition (low complexity).

It belongs to the prefoldin subunit alpha family. Heterohexamer of two alpha and four beta subunits.

The protein localises to the cytoplasm. Functionally, molecular chaperone capable of stabilizing a range of proteins. Seems to fulfill an ATP-independent, HSP70-like function in archaeal de novo protein folding. This chain is Prefoldin subunit alpha, found in Natronomonas pharaonis (strain ATCC 35678 / DSM 2160 / CIP 103997 / JCM 8858 / NBRC 14720 / NCIMB 2260 / Gabara) (Halobacterium pharaonis).